The chain runs to 191 residues: TATA-box-binding protein (191 aa).

Repeat copies occupy residues 18 to 94 (LQNV…AKIV) and 108 to 185 (IQNI…YPVL).

This sequence belongs to the TBP family. Belongs to the TFIID complex together with the TBP-associated factors (TAFs). Binds DNA as monomer.

The protein localises to the nucleus. Its function is as follows. General transcription factor that functions at the core of the DNA-binding multiprotein factor TFIID. Binding of TFIID to the TATA box is the initial transcriptional step of the pre-initiation complex (PIC), playing a role in the activation of eukaryotic genes transcribed by RNA polymerase II. This is TATA-box-binding protein from Acetabularia peniculus (Green alga).